The sequence spans 207 residues: Oligoribonuclease (207 aa).

Residues 20 to 183 (LVWLDMEMTG…ADIHESIDEL (164 aa)) enclose the Exonuclease domain. Residue Y141 is part of the active site.

This sequence belongs to the oligoribonuclease family.

The protein resides in the cytoplasm. Its function is as follows. 3'-to-5' exoribonuclease specific for small oligoribonucleotides. The protein is Oligoribonuclease of Paraburkholderia xenovorans (strain LB400).